A 239-amino-acid polypeptide reads, in one-letter code: 1-(5-phosphoribosyl)-5-[(5-phosphoribosylamino)methylideneamino] imidazole-4-carboxamide isomerase (239 aa).

Aspartate 8 functions as the Proton acceptor in the catalytic mechanism. Aspartate 129 functions as the Proton donor in the catalytic mechanism.

Belongs to the HisA/HisF family.

The protein localises to the cytoplasm. The enzyme catalyses 1-(5-phospho-beta-D-ribosyl)-5-[(5-phospho-beta-D-ribosylamino)methylideneamino]imidazole-4-carboxamide = 5-[(5-phospho-1-deoxy-D-ribulos-1-ylimino)methylamino]-1-(5-phospho-beta-D-ribosyl)imidazole-4-carboxamide. It participates in amino-acid biosynthesis; L-histidine biosynthesis; L-histidine from 5-phospho-alpha-D-ribose 1-diphosphate: step 4/9. The polypeptide is 1-(5-phosphoribosyl)-5-[(5-phosphoribosylamino)methylideneamino] imidazole-4-carboxamide isomerase (Legionella pneumophila (strain Corby)).